Reading from the N-terminus, the 758-residue chain is Aspartyl/asparaginyl beta-hydroxylase (758 aa).

Positions methionine 1–lysine 46 are disordered. Residues methionine 1–serine 53 are Cytoplasmic-facing. Residues serine 9–glycine 31 are compositionally biased toward low complexity. At serine 14 the chain carries Phosphoserine. The chain crosses the membrane as a helical; Signal-anchor for type II membrane protein span at residues phenylalanine 54–tryptophan 74. N-linked (GlcNAc...) asparagine glycosylation occurs at leucine 64. Topologically, residues phenylalanine 75 to isoleucine 758 are lumenal. Residues aspartate 91, aspartate 93, aspartate 95, aspartate 97, and aspartate 102 each contribute to the Ca(2+) site. Disordered regions lie at residues glutamate 111–proline 140 and glutamate 304–alanine 324. The segment covering threonine 313–alanine 324 has biased composition (basic and acidic residues). Residues isoleucine 341–serine 374 form a TPR 1 repeat. Asparagine 452 is a glycosylation site (N-linked (GlcNAc...) asparagine). TPR repeat units lie at residues threonine 454 to aspartate 487, phenylalanine 489 to glycine 521, and glycine 525 to alanine 557. Tryptophan 625 contacts 2-oxoglutarate. Cysteine 641 and cysteine 648 are joined by a disulfide. Residue serine 668 participates in 2-oxoglutarate binding. Fe cation is bound at residue histidine 679. Arginine 688–histidine 690 provides a ligand contact to 2-oxoglutarate. N-linked (GlcNAc...) asparagine glycosylation occurs at asparagine 706. Residue histidine 725 participates in Fe cation binding. Arginine 735 is a binding site for 2-oxoglutarate.

It belongs to the aspartyl/asparaginyl beta-hydroxylase family. Monomer. Isoform 8 interacts with ORAI1 and STIM1. Isoform 4 interacts with CASQ2. Fe cation is required as a cofactor. As to expression, isoform 1 is detected in all tissues tested. Isoform 8 is mainly expressed in pancreas, heart, brain, kidney and liver. Isoform 8 is expressed in kidney (at protein level).

The protein resides in the endoplasmic reticulum membrane. Its subcellular location is the sarcoplasmic reticulum membrane. The catalysed reaction is L-aspartyl-[protein] + 2-oxoglutarate + O2 = 3-hydroxy-L-aspartyl-[protein] + succinate + CO2. Functionally, specifically hydroxylates an Asp or Asn residue in certain epidermal growth factor-like (EGF) domains of a number of proteins. Membrane-bound Ca(2+)-sensing protein, which is a structural component of the ER-plasma membrane junctions. Isoform 8 regulates the activity of Ca(+2) released-activated Ca(+2) (CRAC) channels in T-cells. This chain is Aspartyl/asparaginyl beta-hydroxylase (ASPH), found in Homo sapiens (Human).